A 290-amino-acid polypeptide reads, in one-letter code: Protein CREG2 (290 aa).

Residues 1–31 (MSVRRGRRPARPGTRLSWLLCCSALLSPAAG) form the signal peptide. Asn-165 and Asn-166 each carry an N-linked (GlcNAc...) asparagine glycan.

The protein belongs to the CREG family. Post-translationally, it is not sure whether N-glycosylation is on Asn-165 and/or Asn-166. Brain specific mainly in the limbic system and faintly in the spinal cord but not in cerebellum.

The protein localises to the secreted. In Homo sapiens (Human), this protein is Protein CREG2 (CREG2).